Here is a 281-residue protein sequence, read N- to C-terminus: E3 ubiquitin-protein ligase MARCHF5 (281 aa).

The segment at 9–78 (LPQTMDRSCW…PQCNAEYLIV (70 aa)) adopts an RING-CH-type zinc-finger fold. Positions 17, 20, 36, 38, 46, 49, 68, and 71 each coordinate Zn(2+). The next 4 helical transmembrane spans lie at 102–122 (FAAA…YGAV), 142–162 (PLFL…GKMI), 212–232 (ILCG…LMFS), and 241–261 (TILG…YFKQ).

The protein resides in the mitochondrion outer membrane. Its subcellular location is the endoplasmic reticulum membrane. It catalyses the reaction S-ubiquitinyl-[E2 ubiquitin-conjugating enzyme]-L-cysteine + [acceptor protein]-L-lysine = [E2 ubiquitin-conjugating enzyme]-L-cysteine + N(6)-ubiquitinyl-[acceptor protein]-L-lysine.. It participates in protein modification; protein ubiquitination. In terms of biological role, mitochondrial E3 ubiquitin-protein ligase that plays a crucial role in the control of mitochondrial morphology by acting as a positive regulator of mitochondrial fission. May play a role in the prevention of cell senescence acting as a regulator of mitochondrial quality control. The chain is E3 ubiquitin-protein ligase MARCHF5 (MARCHF5) from Gallus gallus (Chicken).